We begin with the raw amino-acid sequence, 123 residues long: Small ribosomal subunit protein uS12c (123 aa).

A disordered region spans residues 9-31 (RNKRQAAENKTKSPALQRSPQRR).

Belongs to the universal ribosomal protein uS12 family. As to quaternary structure, part of the 30S ribosomal subunit.

It localises to the plastid. The protein localises to the chloroplast. Functionally, with S4 and S5 plays an important role in translational accuracy. Located at the interface of the 30S and 50S subunits. The chain is Small ribosomal subunit protein uS12c (rps12) from Spirogyra maxima (Green alga).